The chain runs to 160 residues: 2-C-methyl-D-erythritol 2,4-cyclodiphosphate synthase (160 aa).

Residues aspartate 11 and histidine 13 each contribute to the a divalent metal cation site. 4-CDP-2-C-methyl-D-erythritol 2-phosphate-binding positions include 11-13 and 37-38; these read DIH and HS. Residue histidine 45 participates in a divalent metal cation binding. 4-CDP-2-C-methyl-D-erythritol 2-phosphate contacts are provided by residues 59-61, 135-138, and arginine 145; these read DIG and TTNE.

This sequence belongs to the IspF family. Homotrimer. A divalent metal cation is required as a cofactor.

It catalyses the reaction 4-CDP-2-C-methyl-D-erythritol 2-phosphate = 2-C-methyl-D-erythritol 2,4-cyclic diphosphate + CMP. Its pathway is isoprenoid biosynthesis; isopentenyl diphosphate biosynthesis via DXP pathway; isopentenyl diphosphate from 1-deoxy-D-xylulose 5-phosphate: step 4/6. In terms of biological role, involved in the biosynthesis of isopentenyl diphosphate (IPP) and dimethylallyl diphosphate (DMAPP), two major building blocks of isoprenoid compounds. Catalyzes the conversion of 4-diphosphocytidyl-2-C-methyl-D-erythritol 2-phosphate (CDP-ME2P) to 2-C-methyl-D-erythritol 2,4-cyclodiphosphate (ME-CPP) with a corresponding release of cytidine 5-monophosphate (CMP). This Synechococcus elongatus (strain ATCC 33912 / PCC 7942 / FACHB-805) (Anacystis nidulans R2) protein is 2-C-methyl-D-erythritol 2,4-cyclodiphosphate synthase.